The chain runs to 87 residues: MNLEPPKAEIRSATRVMGGPVTPRKGPPKFKQRQTRQFKSKPPKKGVQGFGDDIPGMEGLGTDITVICPWEAFNHLELHELAQYGII.

Methionine 1 bears the N-acetylmethionine mark. Residues 1–12 show a composition bias toward basic and acidic residues; it reads MNLEPPKAEIRS. Positions 1–55 are disordered; sequence MNLEPPKAEIRSATRVMGGPVTPRKGPPKFKQRQTRQFKSKPPKKGVQGFGDDIP. Residues 26 to 44 are compositionally biased toward basic residues; it reads GPPKFKQRQTRQFKSKPPK.

Belongs to the rod/cone cGMP-PDE gamma subunit family. As to quaternary structure, oligomer composed of two catalytic chains (alpha and beta), an inhibitory chain (gamma) and the delta chain.

The enzyme catalyses 3',5'-cyclic GMP + H2O = GMP + H(+). Functionally, participates in processes of transmission and amplification of the visual signal. cGMP-PDEs are the effector molecules in G-protein-mediated phototransduction in vertebrate rods and cones. The chain is Retinal rod rhodopsin-sensitive cGMP 3',5'-cyclic phosphodiesterase subunit gamma (PDE6G) from Bos taurus (Bovine).